Here is a 363-residue protein sequence, read N- to C-terminus: S-methylmethionine--homocysteine S-methyltransferase BHMT2 (363 aa).

In terms of domain architecture, Hcy-binding spans 11 to 305; it reads KVILERLDSG…YHIRAIAEEL (295 aa). Residues Cys-208, Cys-290, and Cys-291 each coordinate Zn(2+).

As to quaternary structure, homotetramer. The cofactor is Zn(2+).

It catalyses the reaction S-methyl-L-methionine + L-homocysteine = 2 L-methionine + H(+). The protein operates within amino-acid biosynthesis; L-methionine biosynthesis via de novo pathway; L-methionine from L-homocysteine (BhmT route): step 1/1. In terms of biological role, involved in the regulation of homocysteine metabolism. Converts betaine and homocysteine to dimethylglycine and methionine, respectively. This reaction is also required for the irreversible oxidation of choline. The sequence is that of S-methylmethionine--homocysteine S-methyltransferase BHMT2 (Bhmt2) from Rattus norvegicus (Rat).